The primary structure comprises 215 residues: Hibernation-associated plasma protein HP-25 (215 aa).

The N-terminal stretch at 1–28 (MPAQRGGALSMGAAGFWILVLSITSALA) is a signal peptide. Residues 29-96 (DSNNQGNSEP…RPKSAFAVKL (68 aa)) are disordered. Pro residues-rich tracts occupy residues 39 to 51 (CGPP…PGIP) and 60 to 77 (LGPP…PQGP). Residues 40-81 (GPPGPPGPPGIPGFPGAPGALGPPGPPGVPGIPGPQGPPGDV) form the Collagen-like domain. A C1q domain is found at 85-215 (SSRPKSAFAV…VFFGYLLYGK (131 aa)). N-linked (GlcNAc...) asparagine glycosylation is present at N167.

Plasma; synthesized in the liver.

Its subcellular location is the secreted. Its function is as follows. Plasma proteins HP-20, HP-25, HP-27 and HP-55 form a 140 kDa complex via disulfide bonds in the plasma and are hibernation specific. The polypeptide is Hibernation-associated plasma protein HP-25 (Tamias sibiricus (Siberian chipmunk)).